Here is a 65-residue protein sequence, read N- to C-terminus: Photosystem II reaction center protein Z (65 aa).

The next 2 membrane-spanning stretches (helical) occupy residues 8 to 28 (AVFALVLLSFVLIVAVPVALA) and 41 to 61 (YAGAALWTSLIIVIGVLDSVV).

It belongs to the PsbZ family. As to quaternary structure, PSII is composed of 1 copy each of membrane proteins PsbA, PsbB, PsbC, PsbD, PsbE, PsbF, PsbH, PsbI, PsbJ, PsbK, PsbL, PsbM, PsbT, PsbX, PsbY, PsbZ, Psb30/Ycf12, at least 3 peripheral proteins of the oxygen-evolving complex and a large number of cofactors. It forms dimeric complexes.

The protein resides in the plastid. Its subcellular location is the cyanelle thylakoid membrane. In terms of biological role, may control the interaction of photosystem II (PSII) cores with the light-harvesting antenna, regulates electron flow through the 2 photosystem reaction centers. PSII is a light-driven water plastoquinone oxidoreductase, using light energy to abstract electrons from H(2)O, generating a proton gradient subsequently used for ATP formation. This Cyanophora paradoxa protein is Photosystem II reaction center protein Z.